A 427-amino-acid chain; its full sequence is MPRIVSVKAREVLDSRGEPTVEVEVELEDGTVGRAMVPSGASTGTYEALELRDGDDRYGGKGVRRAVRNVEEIIAPEIEGLDATAQPDIDRTMIELDGTENKSHLGANAILGVSLAVARAAAKSLGIPLYRYLGGPTARRLPVPFMNVINGGEHAGNELDFQEHMIVPHGFESFSEALRAGVETYHVLGELLEEEYGPIATNVGDEGGYAPPMKDTVEPLDVLVEAIEEAGYAPGKEIALALDAAASEFYDEDSGTYRAYGQKYTRDELIDVYKDLVSQYPIVSIEDPLHEEDFRGFAKITEELGDKVQIVGDDLFVTNPDRLRKGIEMGAANALLLKVNQIGTLTEAVEAGELALQHGYGVMVSHRSGDTEDPFIADLAVALGCGQIKTGAPARSSRTAKYNRLLRIEEDLAGAAEFGPRNDFFLP.

Glutamine 162 serves as a coordination point for (2R)-2-phosphoglycerate. The active-site Proton donor is the glutamate 206. Residues aspartate 243, glutamate 286, and aspartate 313 each contribute to the Mg(2+) site. (2R)-2-phosphoglycerate is bound by residues lysine 338, arginine 367, serine 368, and lysine 389. Lysine 338 (proton acceptor) is an active-site residue.

This sequence belongs to the enolase family. The cofactor is Mg(2+).

The protein resides in the cytoplasm. It localises to the secreted. The protein localises to the cell surface. The catalysed reaction is (2R)-2-phosphoglycerate = phosphoenolpyruvate + H2O. Its pathway is carbohydrate degradation; glycolysis; pyruvate from D-glyceraldehyde 3-phosphate: step 4/5. In terms of biological role, catalyzes the reversible conversion of 2-phosphoglycerate (2-PG) into phosphoenolpyruvate (PEP). It is essential for the degradation of carbohydrates via glycolysis. The chain is Enolase from Methanopyrus kandleri (strain AV19 / DSM 6324 / JCM 9639 / NBRC 100938).